The following is a 316-amino-acid chain: MEIVLANPRGFCAGVDRAIAIVNRALECFNPPIYVRHEVVHNKFVVDDLRQRGAVFVDELDQVPDDSIVIFSAHGVSKAVQQEAERRGLKVFDATCPLVTKVHIEVTKYAREGTEAILIGHEGHPEVEGTMGQYDKLKGGDIYLVEDEADVAALEVRHPEKLAFVTQTTLSIDDTAKVIDALRAKFPNIQGPRKDDICYATQNRQDAVRDLAEKCDVVLVVGSPNSSNSNRLRELAERMGKAAYLVDNADQLEQSWFNDTCKIGVTAGASAPEILIKQVIQRLQDWGAQAPKELEGREENITFSLPKELRIHVTQA.

Cys12 contributes to the [4Fe-4S] cluster binding site. (2E)-4-hydroxy-3-methylbut-2-enyl diphosphate is bound by residues His41 and His74. 2 residues coordinate dimethylallyl diphosphate: His41 and His74. Isopentenyl diphosphate is bound by residues His41 and His74. Position 96 (Cys96) interacts with [4Fe-4S] cluster. His124 serves as a coordination point for (2E)-4-hydroxy-3-methylbut-2-enyl diphosphate. His124 provides a ligand contact to dimethylallyl diphosphate. His124 contributes to the isopentenyl diphosphate binding site. The active-site Proton donor is Glu126. Position 168 (Thr168) interacts with (2E)-4-hydroxy-3-methylbut-2-enyl diphosphate. Cys198 contributes to the [4Fe-4S] cluster binding site. (2E)-4-hydroxy-3-methylbut-2-enyl diphosphate-binding residues include Ser226, Ser227, Asn228, and Ser270. Ser226, Ser227, Asn228, and Ser270 together coordinate dimethylallyl diphosphate. The isopentenyl diphosphate site is built by Ser226, Ser227, Asn228, and Ser270.

The protein belongs to the IspH family. The cofactor is [4Fe-4S] cluster.

It carries out the reaction isopentenyl diphosphate + 2 oxidized [2Fe-2S]-[ferredoxin] + H2O = (2E)-4-hydroxy-3-methylbut-2-enyl diphosphate + 2 reduced [2Fe-2S]-[ferredoxin] + 2 H(+). The catalysed reaction is dimethylallyl diphosphate + 2 oxidized [2Fe-2S]-[ferredoxin] + H2O = (2E)-4-hydroxy-3-methylbut-2-enyl diphosphate + 2 reduced [2Fe-2S]-[ferredoxin] + 2 H(+). The protein operates within isoprenoid biosynthesis; dimethylallyl diphosphate biosynthesis; dimethylallyl diphosphate from (2E)-4-hydroxy-3-methylbutenyl diphosphate: step 1/1. It functions in the pathway isoprenoid biosynthesis; isopentenyl diphosphate biosynthesis via DXP pathway; isopentenyl diphosphate from 1-deoxy-D-xylulose 5-phosphate: step 6/6. In terms of biological role, catalyzes the conversion of 1-hydroxy-2-methyl-2-(E)-butenyl 4-diphosphate (HMBPP) into a mixture of isopentenyl diphosphate (IPP) and dimethylallyl diphosphate (DMAPP). Acts in the terminal step of the DOXP/MEP pathway for isoprenoid precursor biosynthesis. The chain is 4-hydroxy-3-methylbut-2-enyl diphosphate reductase from Acinetobacter baumannii (strain AB307-0294).